Consider the following 485-residue polypeptide: Inosine-5'-monophosphate dehydrogenase (485 aa).

CBS domains follow at residues 95-154 (VITN…IDDV) and 155-215 (MTKE…AKDS). NAD(+)-binding positions include aspartate 249 and 299–301 (GIG). Glycine 301 and glycine 303 together coordinate K(+). Serine 304 contacts IMP. Cysteine 306 lines the K(+) pocket. Cysteine 306 functions as the Thioimidate intermediate in the catalytic mechanism. IMP contacts are provided by residues 339–341 (DGG), 362–363 (GS), and 386–390 (YRGMG). Arginine 402 serves as the catalytic Proton acceptor. Glutamate 414 contacts IMP. K(+)-binding residues include glutamate 468, serine 469, and histidine 470.

It belongs to the IMPDH/GMPR family. As to quaternary structure, homotetramer. Requires K(+) as cofactor.

The catalysed reaction is IMP + NAD(+) + H2O = XMP + NADH + H(+). It participates in purine metabolism; XMP biosynthesis via de novo pathway; XMP from IMP: step 1/1. Its activity is regulated as follows. Mycophenolic acid (MPA) is a non-competitive inhibitor that prevents formation of the closed enzyme conformation by binding to the same site as the amobile flap. In contrast, mizoribine monophosphate (MZP) is a competitive inhibitor that induces the closed conformation. MPA is a potent inhibitor of mammalian IMPDHs but a poor inhibitor of the bacterial enzymes. MZP is a more potent inhibitor of bacterial IMPDH. Catalyzes the conversion of inosine 5'-phosphate (IMP) to xanthosine 5'-phosphate (XMP), the first committed and rate-limiting step in the de novo synthesis of guanine nucleotides, and therefore plays an important role in the regulation of cell growth. This chain is Inosine-5'-monophosphate dehydrogenase, found in Halalkalibacterium halodurans (strain ATCC BAA-125 / DSM 18197 / FERM 7344 / JCM 9153 / C-125) (Bacillus halodurans).